The sequence spans 227 residues: PKHD-type hydroxylase GDI1238/Gdia_1949 (227 aa).

Residues 78–178 form the Fe2OG dioxygenase domain; that stretch reads RVVPPLFNRY…RLASFFWTQS (101 aa). Positions 96, 98, and 159 each coordinate Fe cation. Arginine 169 is a 2-oxoglutarate binding site.

Fe(2+) serves as cofactor. Requires L-ascorbate as cofactor.

The chain is PKHD-type hydroxylase GDI1238/Gdia_1949 from Gluconacetobacter diazotrophicus (strain ATCC 49037 / DSM 5601 / CCUG 37298 / CIP 103539 / LMG 7603 / PAl5).